The chain runs to 80 residues: Clavanin-D (80 aa).

Positions 1 to 19 (MKTTILILLILGLGINAKS) are cleaved as a signal peptide. A propeptide spanning residues 20–29 (LEERKSEEEK) is cleaved from the precursor. The residue at position 52 (Phe-52) is a Phenylalanine amide. A propeptide spanning residues 54-80 (DDQQDNGKFYGHYAEDNGKHWYDTGDQ) is cleaved from the precursor.

Hemocytes and pharyngeal tissues.

It localises to the secreted. Has antimicrobial activity against E.coli, L.monocytogenes and C.albicans. The polypeptide is Clavanin-D (Styela clava (Sea squirt)).